We begin with the raw amino-acid sequence, 285 residues long: Polyamine aminopropyltransferase (285 aa).

Residues 5 to 241 form the PABS domain; the sequence is DNWYIEHFQP…GWWSVTMASK (237 aa). An S-methyl-5'-thioadenosine-binding site is contributed by glutamine 35. Spermidine is bound by residues histidine 66 and aspartate 90. S-methyl-5'-thioadenosine is bound by residues aspartate 110 and 141 to 142; that span reads DG. Catalysis depends on aspartate 160, which acts as the Proton acceptor. 160 to 163 lines the spermidine pocket; sequence DSTD. Proline 167 serves as a coordination point for S-methyl-5'-thioadenosine.

This sequence belongs to the spermidine/spermine synthase family. In terms of assembly, homodimer or homotetramer.

It is found in the cytoplasm. The catalysed reaction is S-adenosyl 3-(methylsulfanyl)propylamine + putrescine = S-methyl-5'-thioadenosine + spermidine + H(+). The protein operates within amine and polyamine biosynthesis; spermidine biosynthesis; spermidine from putrescine: step 1/1. Functionally, catalyzes the irreversible transfer of a propylamine group from the amino donor S-adenosylmethioninamine (decarboxy-AdoMet) to putrescine (1,4-diaminobutane) to yield spermidine. The polypeptide is Polyamine aminopropyltransferase (Xanthomonas oryzae pv. oryzae (strain MAFF 311018)).